Reading from the N-terminus, the 1034-residue chain is Potassium-transporting ATPase alpha chain 1 (1034 aa).

Over 1-97 (MGKAENYELY…NALRPPRGTP (97 aa)) the chain is Cytoplasmic. Tyr7 and Tyr10 each carry phosphotyrosine. Positions 14-41 (LGSGPGGDMTAKMSKKKAGGGGGKKKEK) are disordered. Over residues 26–39 (MSKKKAGGGGGKKK) the composition is skewed to basic residues. Residue Ser27 is modified to Phosphoserine. The chain crosses the membrane as a helical span at residues 98-118 (EYVKFARQLAGGLQCLMWVAA). Residues 119 to 141 (AICLIAFAIQASEGDLTTDDNLY) are Lumenal-facing. Residues 142–162 (LAVALIAVVVVTGCFGYYQEF) traverse the membrane as a helical segment. The Cytoplasmic portion of the chain corresponds to 163–298 (KSTNIIASFK…NEKTPIAIEI (136 aa)). Residues 299-318 (EHFVDIIAGLAILFGATFFV) traverse the membrane as a helical segment. At 319-330 (VAMCIGYTFLRA) the chain is on the lumenal side. A helical membrane pass occupies residues 331–348 (MVFFMAIVVAYVPEGLLA). Residues Val339, Ala340, Val342, and Glu344 each contribute to the K(+) site. Topologically, residues 349–782 (TVTVCLSLTA…EQGRLIFDNL (434 aa)) are cytoplasmic. Asp386 (4-aspartylphosphate intermediate) is an active-site residue. Residues Asp386 and Thr388 each coordinate Mg(2+). 2 positions are modified to phosphoserine: Ser462 and Ser600. Mg(2+) is bound by residues Asp727 and Asp731. A helical transmembrane segment spans residues 783–802 (KKSIAYTLTKNIPELTPYLI). Position 796 (Glu796) interacts with K(+). Residues 803-812 (YITVSVPLPL) are Lumenal-facing. The helical transmembrane segment at 813-833 (GCITILFIELCTDIFPSVSLA) threads the bilayer. Glu821 contributes to the K(+) binding site. Residues 834 to 853 (YEKAESDIMHLRPRNPKRDR) lie on the Cytoplasmic side of the membrane. At Ser839 the chain carries Phosphoserine. Residues 854–876 (LVNEPLAAYSYFQIGAIQSFAGF) traverse the membrane as a helical segment. Topologically, residues 877-928 (ADYFTAMAQEGWFPLLCVGLRPQWEDHHLQDLQDSYGQEWTFGQRLYQQYTC) are lumenal. Residues 929–948 (YTVFFISIEMCQIADVLIRK) form a helical membrane-spanning segment. Residues 949–962 (TRRLSVFQQGFFRN) are Cytoplasmic-facing. Position 953 is a phosphoserine; by PKA (Ser953). A helical membrane pass occupies residues 963–981 (KILVIAIVFQVCIGCFLCY). The Lumenal portion of the chain corresponds to 982–996 (CPGMPNIFNFMPIRF). A helical membrane pass occupies residues 997–1017 (QWWLVPMPFGLLIFVYDEIRK). The Cytoplasmic segment spans residues 1018-1034 (LGVRCCPGSWWDQELYY).

The protein belongs to the cation transport ATPase (P-type) (TC 3.A.3) family. Type IIC subfamily. The gastric H(+)/K(+) ATPase pump is composed of the catalytic alpha subunit ATP4A and the regulatory beta subunit ATP4B. Interacts (via the P-domain) with ATP4B (via N-terminus); this interaction stabilizes the lumenal-open E2 conformation state and prevents the reverse reaction of the transport cycle. As to expression, expressed in parietal cells (at protein level).

Its subcellular location is the apical cell membrane. It carries out the reaction K(+)(out) + ATP + H2O + H(+)(in) = K(+)(in) + ADP + phosphate + 2 H(+)(out). Its function is as follows. The catalytic subunit of the gastric H(+)/K(+) ATPase pump which transports H(+) ions in exchange for K(+) ions across the apical membrane of parietal cells. Uses ATP as an energy source to pump H(+) ions to the gastric lumen while transporting K(+) ion from the lumen into the cell. Remarkably generates a million-fold proton gradient across the gastric parietal cell membrane, acidifying the gastric juice down to pH 1. Within a transport cycle, the transfer of a H(+) ion across the membrane is coupled to ATP hydrolysis and is associated with a transient phosphorylation that shifts the pump conformation from inward-facing (E1) to outward-facing state (E2). The release of the H(+) ion in the stomach lumen is followed by binding of K(+) ion converting the pump conformation back to the E1 state. The chain is Potassium-transporting ATPase alpha chain 1 from Mus musculus (Mouse).